Reading from the N-terminus, the 345-residue chain is Tropomodulin-4 (345 aa).

Residues 42–63 form a disordered region; that stretch reads NMLLPAGLRQRDQTKKSPTGPL.

The protein belongs to the tropomodulin family. As to quaternary structure, binds to the N-terminus of tropomyosin and to actin.

The protein resides in the cytoplasm. The protein localises to the cytoskeleton. In terms of biological role, blocks the elongation and depolymerization of the actin filaments at the pointed end. The Tmod/TM complex contributes to the formation of the short actin protofilament, which in turn defines the geometry of the membrane skeleton. The polypeptide is Tropomodulin-4 (TMOD4) (Bos taurus (Bovine)).